Here is a 337-residue protein sequence, read N- to C-terminus: 4-hydroxy-3-methylbut-2-enyl diphosphate reductase (337 aa).

Cys-38 contacts [4Fe-4S] cluster. (2E)-4-hydroxy-3-methylbut-2-enyl diphosphate is bound by residues His-67 and His-100. 2 residues coordinate dimethylallyl diphosphate: His-67 and His-100. 2 residues coordinate isopentenyl diphosphate: His-67 and His-100. [4Fe-4S] cluster is bound at residue Cys-122. Residue His-150 coordinates (2E)-4-hydroxy-3-methylbut-2-enyl diphosphate. Dimethylallyl diphosphate is bound at residue His-150. His-150 provides a ligand contact to isopentenyl diphosphate. Catalysis depends on Glu-152, which acts as the Proton donor. Thr-190 lines the (2E)-4-hydroxy-3-methylbut-2-enyl diphosphate pocket. Residue Cys-220 participates in [4Fe-4S] cluster binding. (2E)-4-hydroxy-3-methylbut-2-enyl diphosphate-binding residues include Ser-248, Ser-249, Asn-250, and Ser-293. Dimethylallyl diphosphate contacts are provided by Ser-248, Ser-249, Asn-250, and Ser-293. Residues Ser-248, Ser-249, Asn-250, and Ser-293 each contribute to the isopentenyl diphosphate site.

Belongs to the IspH family. The cofactor is [4Fe-4S] cluster.

The enzyme catalyses isopentenyl diphosphate + 2 oxidized [2Fe-2S]-[ferredoxin] + H2O = (2E)-4-hydroxy-3-methylbut-2-enyl diphosphate + 2 reduced [2Fe-2S]-[ferredoxin] + 2 H(+). It carries out the reaction dimethylallyl diphosphate + 2 oxidized [2Fe-2S]-[ferredoxin] + H2O = (2E)-4-hydroxy-3-methylbut-2-enyl diphosphate + 2 reduced [2Fe-2S]-[ferredoxin] + 2 H(+). It participates in isoprenoid biosynthesis; dimethylallyl diphosphate biosynthesis; dimethylallyl diphosphate from (2E)-4-hydroxy-3-methylbutenyl diphosphate: step 1/1. The protein operates within isoprenoid biosynthesis; isopentenyl diphosphate biosynthesis via DXP pathway; isopentenyl diphosphate from 1-deoxy-D-xylulose 5-phosphate: step 6/6. Its function is as follows. Catalyzes the conversion of 1-hydroxy-2-methyl-2-(E)-butenyl 4-diphosphate (HMBPP) into a mixture of isopentenyl diphosphate (IPP) and dimethylallyl diphosphate (DMAPP). Acts in the terminal step of the DOXP/MEP pathway for isoprenoid precursor biosynthesis. This chain is 4-hydroxy-3-methylbut-2-enyl diphosphate reductase, found in Mycolicibacterium vanbaalenii (strain DSM 7251 / JCM 13017 / BCRC 16820 / KCTC 9966 / NRRL B-24157 / PYR-1) (Mycobacterium vanbaalenii).